The chain runs to 445 residues: Phosphoglucosamine mutase (445 aa).

Residue serine 102 is the Phosphoserine intermediate of the active site. Residues serine 102, aspartate 241, aspartate 243, and aspartate 245 each contribute to the Mg(2+) site. A Phosphoserine modification is found at serine 102.

The protein belongs to the phosphohexose mutase family. The cofactor is Mg(2+). Activated by phosphorylation.

The enzyme catalyses alpha-D-glucosamine 1-phosphate = D-glucosamine 6-phosphate. Functionally, catalyzes the conversion of glucosamine-6-phosphate to glucosamine-1-phosphate. The chain is Phosphoglucosamine mutase from Klebsiella pneumoniae (strain 342).